Consider the following 263-residue polypeptide: 3-deoxy-manno-octulosonate cytidylyltransferase (263 aa).

The protein belongs to the KdsB family.

Its subcellular location is the cytoplasm. The catalysed reaction is 3-deoxy-alpha-D-manno-oct-2-ulosonate + CTP = CMP-3-deoxy-beta-D-manno-octulosonate + diphosphate. The protein operates within nucleotide-sugar biosynthesis; CMP-3-deoxy-D-manno-octulosonate biosynthesis; CMP-3-deoxy-D-manno-octulosonate from 3-deoxy-D-manno-octulosonate and CTP: step 1/1. It functions in the pathway bacterial outer membrane biogenesis; lipopolysaccharide biosynthesis. Functionally, activates KDO (a required 8-carbon sugar) for incorporation into bacterial lipopolysaccharide in Gram-negative bacteria. In Burkholderia vietnamiensis (strain G4 / LMG 22486) (Burkholderia cepacia (strain R1808)), this protein is 3-deoxy-manno-octulosonate cytidylyltransferase.